The primary structure comprises 399 residues: MKHLQKKNSKNPKKIEEKYNTRNSYFILYDRALVWLTLGLFSVGLIMVISTSIPISQKIYHNPLFFIKREIFYFFLIFLLSFIFLRTPIIFWEKNSNIILIISIVLLVLVLLIGHSIHGSFRWINIGFLHIQPSEICKISSFCYLASYLSRKSNEVRNNFWGFFKPMSVIITQSMLLLAEPDLGTVVVLFFTTISVLFLSGAKIGQFFIIITVSILTIILLILLEPYRIKRVLSFWNPWEDPFGNGYQLTQSLIALGRGNFLGQGLGNSIQKLDYLPDAHSDFIFSIIGEELGYIGSFLILLIIFTISFRAMYIGQKALEKKQIFSGFLACSIGIWLSFQTSINVGSVTGILPTKGLTLPFISYGGSSLIINSIAIFFLLRIDFETRLKTSQAFPRGPK.

The next 9 membrane-spanning stretches (helical) occupy residues 33–53, 71–91, 98–118, 160–180, 182–202, 204–224, 287–307, 324–344, and 359–379; these read LVWLTLGLFSVGLIMVISTSI, IFYFFLIFLLSFIFLRTPIIF, IILIISIVLLVLVLLIGHSIH, FWGFFKPMSVIITQSMLLLAE, DLGTVVVLFFTTISVLFLSGA, IGQFFIIITVSILTIILLILL, IIGEELGYIGSFLILLIIFTI, IFSGFLACSIGIWLSFQTSIN, and LPFISYGGSSLIINSIAIFFL.

It belongs to the SEDS family. FtsW subfamily.

The protein resides in the cell inner membrane. The enzyme catalyses [GlcNAc-(1-&gt;4)-Mur2Ac(oyl-L-Ala-gamma-D-Glu-L-Lys-D-Ala-D-Ala)](n)-di-trans,octa-cis-undecaprenyl diphosphate + beta-D-GlcNAc-(1-&gt;4)-Mur2Ac(oyl-L-Ala-gamma-D-Glu-L-Lys-D-Ala-D-Ala)-di-trans,octa-cis-undecaprenyl diphosphate = [GlcNAc-(1-&gt;4)-Mur2Ac(oyl-L-Ala-gamma-D-Glu-L-Lys-D-Ala-D-Ala)](n+1)-di-trans,octa-cis-undecaprenyl diphosphate + di-trans,octa-cis-undecaprenyl diphosphate + H(+). The protein operates within cell wall biogenesis; peptidoglycan biosynthesis. Its function is as follows. Peptidoglycan polymerase that is essential for cell division. The polypeptide is Probable peptidoglycan glycosyltransferase FtsW (Buchnera aphidicola subsp. Acyrthosiphon pisum (strain APS) (Acyrthosiphon pisum symbiotic bacterium)).